Here is a 465-residue protein sequence, read N- to C-terminus: MAP kinase-interacting serine/threonine-protein kinase 2 (465 aa).

Residues 23–72 (ELAFSLDQPDHGDSDFGLQCSARPDMPASQPIDIPDAKKRGKKKKRGRAT) are disordered. The short motif at 60-66 (KKRGKKK) is the Nuclear localization signal element. Serine 74 bears the Phosphoserine mark. Positions 84-388 (QLQEDVLGEG…TPMVLQRNSC (305 aa)) constitute a Protein kinase domain. Residues 90 to 98 (LGEGAHARV) and lysine 113 each bind ATP. 160–162 (EKM) provides a ligand contact to staurosporine. Aspartate 205 (proton acceptor) is an active-site residue. Glutamate 209 contributes to the staurosporine binding site. Residues threonine 244 and threonine 249 each carry the phosphothreonine modification. Zn(2+) contacts are provided by cysteine 299, cysteine 311, and cysteine 314. Threonine 379 carries the post-translational modification Phosphothreonine. A phosphoserine mark is found at serine 437 and serine 440. Positions 444 to 448 (LAQRR) match the MAP kinase binding motif. At serine 452 the chain carries Phosphoserine.

It belongs to the protein kinase superfamily. CAMK Ser/Thr protein kinase family. As to quaternary structure, monomer. Interacts with the C-terminal regions of EIF4G1 and EIF4G2; this interaction is promoted when MAPK pathways are repressed but repressed upon ERK proteins activation. Also binds to dephosphorylated MAPK3/ERK1 and MAPK1/ERK2. Isoform 1 interaction with phosphorylated MAPK3/ERK1 and MAPK1/ERK2 protects it from dephosphorylation and inactivation. Isoform 2 interacts with ESR2 and EIF4E in the nucleus. Requires Mg(2+) as cofactor. The cofactor is Zn(2+). Dual phosphorylation of Thr-244 and Thr-249 activates the kinase. Phosphorylation of Thr-379 activates the kinase. Phosphorylated upon arsenic trioxide As(2)O(3) treatment. Phosphorylated by MAPK1/ERK2, MAPK11 and MAPK14. Dephosphorylated by PP2A. Ubiquitously expressed in all tissues examined. Isoform 2 is expressed at higher levels in the ovary than is isoform 1.

The protein localises to the nucleus. It localises to the PML body. It is found in the cytoplasm. It catalyses the reaction L-seryl-[protein] + ATP = O-phospho-L-seryl-[protein] + ADP + H(+). It carries out the reaction L-threonyl-[protein] + ATP = O-phospho-L-threonyl-[protein] + ADP + H(+). Its activity is regulated as follows. Inhibited by CGP57380 and staurosporine. Activated by phosphorylation in a negative-feedback regulatory manner in response to chemotherapy (e.g. cytarabine) and thus impairs the generation of antileukemic responses. Serine/threonine-protein kinase that phosphorylates SFPQ/PSF, HNRNPA1 and EIF4E. May play a role in the response to environmental stress and cytokines. Appears to regulate translation by phosphorylating EIF4E, thus increasing the affinity of this protein for the 7-methylguanosine-containing mRNA cap. Required for mediating PP2A-inhibition-induced EIF4E phosphorylation. Triggers EIF4E shuttling from cytoplasm to nucleus. Isoform 1 displays a high basal kinase activity, but isoform 2 exhibits a very low kinase activity. Acts as a mediator of the suppressive effects of IFNgamma on hematopoiesis. Negative regulator for signals that control generation of arsenic trioxide As(2)O(3)-dependent apoptosis and anti-leukemic responses. Involved in anti-apoptotic signaling in response to serum withdrawal. The protein is MAP kinase-interacting serine/threonine-protein kinase 2 (MKNK2) of Homo sapiens (Human).